The chain runs to 415 residues: D-galactonate dehydratase family member RspA (415 aa).

Substrate is bound by residues Asn48 and His133. Tyr170 (proton donor/acceptor) is an active-site residue. A Mg(2+)-binding site is contributed by Asp223. The Proton donor/acceptor role is filled by His225. Mg(2+)-binding residues include Glu249 and Glu275. Glu275, Arg296, His325, Asp329, and Glu352 together coordinate substrate.

The protein belongs to the mandelate racemase/muconate lactonizing enzyme family. GalD subfamily. Requires Mg(2+) as cofactor.

It catalyses the reaction D-mannonate = 2-dehydro-3-deoxy-D-gluconate + H2O. Functionally, has low D-mannonate dehydratase activity (in vitro), suggesting that this is not a physiological substrate and that it has no significant role in D-mannonate degradation in vivo. Has no detectable activity with a panel of 70 other acid sugars (in vitro). The chain is D-galactonate dehydratase family member RspA (rspA) from Escherichia coli (strain MS 21-1).